Consider the following 121-residue polypeptide: Large ribosomal subunit protein P2 (121 aa).

The segment covering 72–99 (VAVPSGGAPAAATAAAEAPKGGDKAAAP) has biased composition (low complexity). Residues 72 to 121 (VAVPSGGAPAAATAAAEAPKGGDKAAAPPKEEKKEESEESDADMGFSPFD) are disordered.

It belongs to the eukaryotic ribosomal protein P1/P2 family. In terms of assembly, P1 and P2 exist as dimers at the large ribosomal subunit. Post-translationally, phosphorylated.

Its function is as follows. Plays an important role in the elongation step of protein synthesis. In Taenia solium (Pork tapeworm), this protein is Large ribosomal subunit protein P2.